A 485-amino-acid chain; its full sequence is Dynein axonemal assembly factor 3 (485 aa).

The protein belongs to the DNAAF3 family.

Its subcellular location is the cytoplasm. It localises to the dynein axonemal particle. Functionally, required for the assembly of axonemal inner and outer dynein arms. Involved in preassembly of dyneins into complexes before their transport into cilia. This is Dynein axonemal assembly factor 3 (dnaaf3) from Xenopus laevis (African clawed frog).